The following is a 344-amino-acid chain: KRR1 small subunit processome component homolog (344 aa).

The KH domain maps to 125-193 (DIIKIGNLVH…VRDIVLETMN (69 aa)). A compositionally biased stretch (basic residues) spans 232-245 (NISKRKQPKVKKQK). Disordered stretches follow at residues 232 to 260 (NISKRKQPKVKKQKKEYTPFPPSQPESKV) and 273 to 326 (QEQK…TKVD). Residues 270–295 (FLNQEQKQAKRNQGRTEKQKEAAKRQ) are a coiled coil. Composition is skewed to basic and acidic residues over residues 283-302 (GRTEKQKEAAKRQDERRNKD) and 315-326 (RKKEDGSSTKVD).

The protein belongs to the KRR1 family. In terms of assembly, monomer. Component of the ribosomal small subunit (SSU) processome.

Its subcellular location is the nucleus. The protein resides in the nucleolus. Functionally, required for 40S ribosome biogenesis. Involved in nucleolar processing of pre-18S ribosomal RNA and ribosome assembly. Binds to RNA. Required for female germline development, cell viability during eye development and for survival of dividing cells and epithelial cells during early wing disk development. The sequence is that of KRR1 small subunit processome component homolog from Drosophila yakuba (Fruit fly).